The primary structure comprises 440 residues: Ribosomal protein uS12 methylthiotransferase RimO (440 aa).

An MTTase N-terminal domain is found at 2–117 (VKVGFVSLGC…LPNVIKKLYE (116 aa)). [4Fe-4S] cluster contacts are provided by cysteine 11, cysteine 47, cysteine 80, cysteine 156, cysteine 160, and cysteine 163. Positions 142–371 (ATPKFYAYIK…LNLQRKISLE (230 aa)) constitute a Radical SAM core domain. The 67-residue stretch at 374-440 (RKRISKKYEV…FEYDLVGEVI (67 aa)) folds into the TRAM domain.

Belongs to the methylthiotransferase family. RimO subfamily. It depends on [4Fe-4S] cluster as a cofactor.

The protein resides in the cytoplasm. It carries out the reaction L-aspartate(89)-[ribosomal protein uS12]-hydrogen + (sulfur carrier)-SH + AH2 + 2 S-adenosyl-L-methionine = 3-methylsulfanyl-L-aspartate(89)-[ribosomal protein uS12]-hydrogen + (sulfur carrier)-H + 5'-deoxyadenosine + L-methionine + A + S-adenosyl-L-homocysteine + 2 H(+). Its function is as follows. Catalyzes the methylthiolation of an aspartic acid residue of ribosomal protein uS12. This is Ribosomal protein uS12 methylthiotransferase RimO from Caldicellulosiruptor saccharolyticus (strain ATCC 43494 / DSM 8903 / Tp8T 6331).